A 79-amino-acid chain; its full sequence is Sec-independent protein translocase protein TatA (79 aa).

A helical transmembrane segment spans residues 1 to 21; it reads MGSLSIWHWIVVIAVVLLLFG. A compositionally biased stretch (basic and acidic residues) spans 43 to 60; the sequence is LQDDEKTAEKPDPVKSID. The tract at residues 43–79 is disordered; it reads LQDDEKTAEKPDPVKSIDHNAPTAAAPTRTDVGSKAV.

This sequence belongs to the TatA/E family. The Tat system comprises two distinct complexes: a TatABC complex, containing multiple copies of TatA, TatB and TatC subunits, and a separate TatA complex, containing only TatA subunits. Substrates initially bind to the TatABC complex, which probably triggers association of the separate TatA complex to form the active translocon.

It is found in the cell inner membrane. Its function is as follows. Part of the twin-arginine translocation (Tat) system that transports large folded proteins containing a characteristic twin-arginine motif in their signal peptide across membranes. TatA could form the protein-conducting channel of the Tat system. This chain is Sec-independent protein translocase protein TatA, found in Rhodopseudomonas palustris (strain BisB5).